The primary structure comprises 244 residues: MKIEKKTALVTGANQGLGKEIAIKLSQKGIQVIGTSTTVDGVKTINKYLKKNGFGFILDLKDTDSILEKMKEICQKKYSIDILINNAGITSDNLLVYMSNKEWENVIKINLTSVFYMSKSVIRSMIKKRYGRIVTIGSVIGYLGNRGQINYSASKSGLIGFHKSLALEVAQKGITVNIVSPGFIKTNLTKNLNVFQYKKHLSKIPMKRIGTAEEIANAVIFLSSEKASYITGQTIHVNGGMYMT.

Residues 12–15 (GANQ) and Thr-37 each bind NADP(+). Residues Lys-50 and Gly-53 each contribute to the Ca(2+) site. Residues 59 to 60 (DL) and Asn-86 each bind NADP(+). Ser-138 contributes to the substrate binding site. Residue Asn-145 coordinates Ca(2+). Residue Tyr-151 is the Proton acceptor of the active site. Residues 151 to 155 (YSASK) and Ile-184 each bind NADP(+). Gln-233 and Thr-234 together coordinate Ca(2+).

The protein belongs to the short-chain dehydrogenases/reductases (SDR) family. As to quaternary structure, homotetramer.

It carries out the reaction a (3R)-hydroxyacyl-[ACP] + NADP(+) = a 3-oxoacyl-[ACP] + NADPH + H(+). Its pathway is lipid metabolism; fatty acid biosynthesis. Its function is as follows. Catalyzes the NADPH-dependent reduction of beta-ketoacyl-ACP substrates to beta-hydroxyacyl-ACP products, the first reductive step in the elongation cycle of fatty acid biosynthesis. In Buchnera aphidicola subsp. Schizaphis graminum (strain Sg), this protein is 3-oxoacyl-[acyl-carrier-protein] reductase FabG (fabG).